The sequence spans 83 residues: U5-theraphotoxin-Hs1a 4 (83 aa).

A signal peptide spans 1–21; it reads MKTSMFLTLTGLVLLFVDCYA. Positions 22–49 are excised as a propeptide; the sequence is SESEEKEFPKELLSSIFAADSDFKVEER. 3 disulfides stabilise this stretch: Cys-51/Cys-63, Cys-56/Cys-68, and Cys-62/Cys-75.

This sequence belongs to the neurotoxin 10 (Hwtx-1) family. 51 (Hntx-8) subfamily. Hntx-8 sub-subfamily. In terms of tissue distribution, expressed by the venom gland.

Its subcellular location is the secreted. Agglutinates erythrocytes. The chain is U5-theraphotoxin-Hs1a 4 from Cyriopagopus schmidti (Chinese bird spider).